Here is a 110-residue protein sequence, read N- to C-terminus: Small ribosomal subunit protein bS16 (110 aa).

Residues 84–110 (KRAPRNNPEKAVPRKERKAAAEAAAKA) form a disordered region. A compositionally biased stretch (basic and acidic residues) spans 90–103 (NPEKAVPRKERKAA).

The protein belongs to the bacterial ribosomal protein bS16 family.

This Afipia carboxidovorans (strain ATCC 49405 / DSM 1227 / KCTC 32145 / OM5) (Oligotropha carboxidovorans) protein is Small ribosomal subunit protein bS16.